Reading from the N-terminus, the 311-residue chain is GTP cyclohydrolase MptA (311 aa).

Belongs to the GTP cyclohydrolase IV family. In terms of assembly, homodimer. It depends on Fe(2+) as a cofactor.

It carries out the reaction GTP + H2O = 7,8-dihydroneopterin 2',3'-cyclic phosphate + formate + diphosphate + H(+). Its pathway is cofactor biosynthesis; 5,6,7,8-tetrahydromethanopterin biosynthesis. Functionally, converts GTP to 7,8-dihydro-D-neopterin 2',3'-cyclic phosphate, the first intermediate in the biosynthesis of coenzyme methanopterin. The chain is GTP cyclohydrolase MptA from Methanocorpusculum labreanum (strain ATCC 43576 / DSM 4855 / Z).